The sequence spans 197 residues: Probable proteasome subunit beta type-4 (197 aa).

This sequence belongs to the peptidase T1B family. In terms of assembly, the 26S proteasome consists of a 20S proteasome core and two 19S regulatory subunits. The 20S proteasome core is composed of 28 subunits that are arranged in four stacked rings, resulting in a barrel-shaped structure. The two end rings are each formed by seven alpha subunits, and the two central rings are each formed by seven beta subunits. The catalytic chamber with the active sites is on the inside of the barrel.

It is found in the cytoplasm. The protein resides in the nucleus. Its function is as follows. Non-catalytic component of the proteasome which degrades poly-ubiquitinated proteins in the cytoplasm and in the nucleus. It is essential for the regulated turnover of proteins and for the removal of misfolded proteins. The proteasome is a multicatalytic proteinase complex that is characterized by its ability to cleave peptides with Arg, Phe, Tyr, Leu, and Glu adjacent to the leaving group at neutral or slightly basic pH. It has an ATP-dependent proteolytic activity. This Encephalitozoon cuniculi (strain GB-M1) (Microsporidian parasite) protein is Probable proteasome subunit beta type-4 (PRE1).